Reading from the N-terminus, the 265-residue chain is MQTQSLNQTSYVFRTENLNVYYGSNLAVKNVTLDIPARQITAFIGPSGCGKSTILRCFNRTNDLIPGARVEGKLTYHGKDLYAKEVDPVAVRRRIGMVFQKPNPFPKSIYDNVAYGPRVLGMKVDLDEVVETSLKRAALWDEVKDKLKENGQSLSGGQQQRLCIARALAVQPDVILMDEPCSALDPISTRRIEELMKELVQDYTIIIVTHNLQQAGRVSDMTAFFSVELVGSNRVGELIEFDRTEVIFNSPTKQATRDYVEGRFG.

The ABC transporter domain occupies 13–260 (FRTENLNVYY…PTKQATRDYV (248 aa)). 45–52 (GPSGCGKS) is a binding site for ATP.

Belongs to the ABC transporter superfamily. Phosphate importer (TC 3.A.1.7) family. The complex is composed of two ATP-binding proteins (PstB), two transmembrane proteins (PstC and PstA) and a solute-binding protein (PstS).

It is found in the cell inner membrane. It catalyses the reaction phosphate(out) + ATP + H2O = ADP + 2 phosphate(in) + H(+). Functionally, part of the ABC transporter complex PstSACB involved in phosphate import. Responsible for energy coupling to the transport system. This Synechococcus sp. (strain JA-3-3Ab) (Cyanobacteria bacterium Yellowstone A-Prime) protein is Phosphate import ATP-binding protein PstB 2.